A 78-amino-acid polypeptide reads, in one-letter code: RNA-binding protein KhpA (78 aa).

One can recognise a KH domain in the interval 29-78; it reads TIIYELTVAKGDIGKIIGKEGRTIKAIRTLLVSVASRDNVKVSLEIMEER.

Belongs to the KhpA RNA-binding protein family.

The protein resides in the cytoplasm. In terms of biological role, a probable RNA-binding protein. This Chlamydia trachomatis serovar D (strain ATCC VR-885 / DSM 19411 / UW-3/Cx) protein is RNA-binding protein KhpA.